Consider the following 374-residue polypeptide: Glutamate 5-kinase (374 aa).

Lys8 provides a ligand contact to ATP. Ser49, Asp136, and Asn148 together coordinate substrate. ATP-binding positions include 168 to 169 (TD) and 211 to 217 (TGGMQTK). The PUA domain maps to 276–354 (QGILTLDDGA…TQIRQILGYG (79 aa)).

This sequence belongs to the glutamate 5-kinase family.

It localises to the cytoplasm. The enzyme catalyses L-glutamate + ATP = L-glutamyl 5-phosphate + ADP. Its pathway is amino-acid biosynthesis; L-proline biosynthesis; L-glutamate 5-semialdehyde from L-glutamate: step 1/2. Its function is as follows. Catalyzes the transfer of a phosphate group to glutamate to form L-glutamate 5-phosphate. The protein is Glutamate 5-kinase of Picosynechococcus sp. (strain ATCC 27264 / PCC 7002 / PR-6) (Agmenellum quadruplicatum).